Here is a 605-residue protein sequence, read N- to C-terminus: Acetoin dehydrogenase operon transcriptional activator AcoR (605 aa).

In terms of domain architecture, Sigma-54 factor interaction spans 295 to 520 (VIGQSGRSQA…LFNVFERLSI (226 aa)). Residues 323-330 (GETGTGKE) and 387-396 (ANQGTLFLDE) contribute to the ATP site. The segment at residues 578–597 (VSQAAKISGIPRSTFYKRLK) is a DNA-binding region (H-T-H motif).

Its function is as follows. Acts as a transcriptional activator of the acoABCL operon encoding the acetoin dehydrogenase complex. In Bacillus subtilis (strain 168), this protein is Acetoin dehydrogenase operon transcriptional activator AcoR (acoR).